Here is an 878-residue protein sequence, read N- to C-terminus: Valine--tRNA ligase (878 aa).

The 'HIGH' region signature appears at 45–55 (PNVTGQLHMGH). The 'KMSKS' region motif lies at 524 to 528 (KMSKS). Lysine 527 is a binding site for ATP. A coiled-coil region spans residues 804–871 (PLKDLIDLEK…REKEVLEQRI (68 aa)).

The protein belongs to the class-I aminoacyl-tRNA synthetase family. ValS type 1 subfamily. In terms of assembly, monomer.

It localises to the cytoplasm. It carries out the reaction tRNA(Val) + L-valine + ATP = L-valyl-tRNA(Val) + AMP + diphosphate. Catalyzes the attachment of valine to tRNA(Val). As ValRS can inadvertently accommodate and process structurally similar amino acids such as threonine, to avoid such errors, it has a 'posttransfer' editing activity that hydrolyzes mischarged Thr-tRNA(Val) in a tRNA-dependent manner. This is Valine--tRNA ligase from Carboxydothermus hydrogenoformans (strain ATCC BAA-161 / DSM 6008 / Z-2901).